The sequence spans 254 residues: Transcription factor bHLH51 (254 aa).

The 50-residue stretch at 62 to 111 (SLSRSHRLAEKRRRDRINSHLTALRKLVPNSDKLDKAALLATVIEQVKEL) folds into the bHLH domain.

Homodimer. Expressed constitutively in roots, stems, and flowers.

The protein resides in the nucleus. This chain is Transcription factor bHLH51 (BHLH51), found in Arabidopsis thaliana (Mouse-ear cress).